We begin with the raw amino-acid sequence, 287 residues long: Pyridoxal 5'-phosphate synthase subunit PdxS (287 aa).

Asp21 lines the D-ribose 5-phosphate pocket. Residue Lys78 is the Schiff-base intermediate with D-ribose 5-phosphate of the active site. A D-ribose 5-phosphate-binding site is contributed by Gly150. Arg162 contacts D-glyceraldehyde 3-phosphate. Residues Gly211 and 232 to 233 (GS) each bind D-ribose 5-phosphate.

This sequence belongs to the PdxS/SNZ family. In the presence of PdxT, forms a dodecamer of heterodimers.

The enzyme catalyses aldehydo-D-ribose 5-phosphate + D-glyceraldehyde 3-phosphate + L-glutamine = pyridoxal 5'-phosphate + L-glutamate + phosphate + 3 H2O + H(+). It participates in cofactor biosynthesis; pyridoxal 5'-phosphate biosynthesis. In terms of biological role, catalyzes the formation of pyridoxal 5'-phosphate from ribose 5-phosphate (RBP), glyceraldehyde 3-phosphate (G3P) and ammonia. The ammonia is provided by the PdxT subunit. Can also use ribulose 5-phosphate and dihydroxyacetone phosphate as substrates, resulting from enzyme-catalyzed isomerization of RBP and G3P, respectively. The polypeptide is Pyridoxal 5'-phosphate synthase subunit PdxS (Tropheryma whipplei (strain TW08/27) (Whipple's bacillus)).